The primary structure comprises 286 residues: Aldo-keto reductase MAV_4483 (286 aa).

Y61 functions as the Proton donor in the catalytic mechanism. Positions 201, 203, 239, 241, 242, 247, and 251 each coordinate NADPH.

This sequence belongs to the aldo/keto reductase family.

In Mycobacterium avium (strain 104), this protein is Aldo-keto reductase MAV_4483.